A 137-amino-acid polypeptide reads, in one-letter code: Large-conductance mechanosensitive channel (137 aa).

The next 2 membrane-spanning stretches (helical) occupy residues 9 to 29 (AFAVKGNVVDMAVGIIIGAAF) and 79 to 99 (IQSVLDFVIVAFAIFMGVKAI).

It belongs to the MscL family. Homopentamer.

The protein localises to the cell inner membrane. Its function is as follows. Channel that opens in response to stretch forces in the membrane lipid bilayer. May participate in the regulation of osmotic pressure changes within the cell. This chain is Large-conductance mechanosensitive channel, found in Pseudomonas fluorescens (strain Pf0-1).